Consider the following 301-residue polypeptide: Acetylglutamate kinase (301 aa).

Residues G68–G69, R90, and N195 each bind substrate.

This sequence belongs to the acetylglutamate kinase family. ArgB subfamily.

The protein localises to the cytoplasm. The catalysed reaction is N-acetyl-L-glutamate + ATP = N-acetyl-L-glutamyl 5-phosphate + ADP. Its pathway is amino-acid biosynthesis; L-arginine biosynthesis; N(2)-acetyl-L-ornithine from L-glutamate: step 2/4. Its function is as follows. Catalyzes the ATP-dependent phosphorylation of N-acetyl-L-glutamate. The sequence is that of Acetylglutamate kinase from Pseudomonas fluorescens (strain SBW25).